We begin with the raw amino-acid sequence, 251 residues long: Probable transcriptional regulatory protein Arth_2304 (251 aa).

Belongs to the TACO1 family.

Its subcellular location is the cytoplasm. The sequence is that of Probable transcriptional regulatory protein Arth_2304 from Arthrobacter sp. (strain FB24).